The primary structure comprises 539 residues: Phosphoenolpyruvate carboxykinase (ATP) (539 aa).

Residues arginine 64, tyrosine 206, and lysine 212 each contribute to the substrate site. Residues lysine 212, histidine 231, and 247 to 255 (GLSGTGKTT) contribute to the ATP site. The Mn(2+) site is built by lysine 212 and histidine 231. Aspartate 268 is a Mn(2+) binding site. ATP is bound by residues glutamate 296, arginine 332, 448 to 449 (RI), and threonine 454. Arginine 332 contacts substrate.

It belongs to the phosphoenolpyruvate carboxykinase (ATP) family. As to quaternary structure, monomer. Requires Mn(2+) as cofactor.

Its subcellular location is the cytoplasm. It carries out the reaction oxaloacetate + ATP = phosphoenolpyruvate + ADP + CO2. The protein operates within carbohydrate biosynthesis; gluconeogenesis. In terms of biological role, involved in the gluconeogenesis. Catalyzes the conversion of oxaloacetate (OAA) to phosphoenolpyruvate (PEP) through direct phosphoryl transfer between the nucleoside triphosphate and OAA. This Yersinia pseudotuberculosis serotype O:1b (strain IP 31758) protein is Phosphoenolpyruvate carboxykinase (ATP).